A 647-amino-acid chain; its full sequence is Macrolide export ATP-binding/permease protein MacB (647 aa).

The region spanning 5-243 (LELKGIERSY…TQTPSLTSKI (239 aa)) is the ABC transporter domain. 41–48 (GASGSGKS) contacts ATP. 4 helical membrane passes run 272-292 (LLTM…LVIG), 522-542 (LFLT…VMNI), 576-596 (ILVC…IAFI), and 610-630 (PIAL…FGFL).

The protein belongs to the ABC transporter superfamily. Macrolide exporter (TC 3.A.1.122) family. In terms of assembly, homodimer. Part of the tripartite efflux system MacAB-TolC, which is composed of an inner membrane transporter, MacB, a periplasmic membrane fusion protein, MacA, and an outer membrane component, TolC. The complex forms a large protein conduit and can translocate molecules across both the inner and outer membranes. Interacts with MacA.

The protein resides in the cell inner membrane. Its function is as follows. Part of the tripartite efflux system MacAB-TolC. MacB is a non-canonical ABC transporter that contains transmembrane domains (TMD), which form a pore in the inner membrane, and an ATP-binding domain (NBD), which is responsible for energy generation. Confers resistance against macrolides. The protein is Macrolide export ATP-binding/permease protein MacB of Photorhabdus laumondii subsp. laumondii (strain DSM 15139 / CIP 105565 / TT01) (Photorhabdus luminescens subsp. laumondii).